The primary structure comprises 529 residues: Bifunctional purine biosynthesis protein PurH (529 aa).

In terms of domain architecture, MGS-like spans M1–V148. K287 bears the N6-acetyllysine mark.

The protein belongs to the PurH family.

The catalysed reaction is (6R)-10-formyltetrahydrofolate + 5-amino-1-(5-phospho-beta-D-ribosyl)imidazole-4-carboxamide = 5-formamido-1-(5-phospho-D-ribosyl)imidazole-4-carboxamide + (6S)-5,6,7,8-tetrahydrofolate. It catalyses the reaction IMP + H2O = 5-formamido-1-(5-phospho-D-ribosyl)imidazole-4-carboxamide. Its pathway is purine metabolism; IMP biosynthesis via de novo pathway; 5-formamido-1-(5-phospho-D-ribosyl)imidazole-4-carboxamide from 5-amino-1-(5-phospho-D-ribosyl)imidazole-4-carboxamide (10-formyl THF route): step 1/1. The protein operates within purine metabolism; IMP biosynthesis via de novo pathway; IMP from 5-formamido-1-(5-phospho-D-ribosyl)imidazole-4-carboxamide: step 1/1. This chain is Bifunctional purine biosynthesis protein PurH, found in Escherichia fergusonii (strain ATCC 35469 / DSM 13698 / CCUG 18766 / IAM 14443 / JCM 21226 / LMG 7866 / NBRC 102419 / NCTC 12128 / CDC 0568-73).